Here is a 536-residue protein sequence, read N- to C-terminus: Bifunctional purine biosynthesis protein PurH (536 aa).

The region spanning 8 to 158 (IPAPDEVRIK…KNHAYVTIVT (151 aa)) is the MGS-like domain.

This sequence belongs to the PurH family.

The enzyme catalyses (6R)-10-formyltetrahydrofolate + 5-amino-1-(5-phospho-beta-D-ribosyl)imidazole-4-carboxamide = 5-formamido-1-(5-phospho-D-ribosyl)imidazole-4-carboxamide + (6S)-5,6,7,8-tetrahydrofolate. The catalysed reaction is IMP + H2O = 5-formamido-1-(5-phospho-D-ribosyl)imidazole-4-carboxamide. The protein operates within purine metabolism; IMP biosynthesis via de novo pathway; 5-formamido-1-(5-phospho-D-ribosyl)imidazole-4-carboxamide from 5-amino-1-(5-phospho-D-ribosyl)imidazole-4-carboxamide (10-formyl THF route): step 1/1. It participates in purine metabolism; IMP biosynthesis via de novo pathway; IMP from 5-formamido-1-(5-phospho-D-ribosyl)imidazole-4-carboxamide: step 1/1. This is Bifunctional purine biosynthesis protein PurH from Rhizobium meliloti (strain 1021) (Ensifer meliloti).